A 150-amino-acid polypeptide reads, in one-letter code: MAGILFEDIFDVKDIDPEGKKFDRVSRLHCESESFKMDLILDVNIQIYPVDLGDKFRLVIASTLYEDGTLDDGEYNPTDDRPSRADQFEYVMYGKVYRIEGDETSTEAATRLSAYVSYGGLLMRLQGDANNLHGFEVDSRVYLLMKKLAF.

A2 carries the N-acetylalanine modification.

The protein belongs to the eukaryotic RPB8 RNA polymerase subunit family. As to quaternary structure, component of the RNA polymerase I (Pol I), RNA polymerase II (Pol II) and RNA polymerase III (Pol III) complexes consisting of at least 13, 12 and 17 subunits, respectively. Pol I complex consists of a ten-subunit catalytic core composed of POLR1A/RPA1, POLR1B/RPA2, POLR1C/RPAC1, POLR1D/RPAC2, POLR1H/RPA12, POLR2E/RPABC1, POLR2F/RPABC2, POLR2H/RPABC3, POLR2K/RPABC4 and POLR2L/RPABC5; a mobile stalk subunit POLR1F/RPA43 protruding from the core and additional subunits homologous to general transcription factors POLR1E/RPA49 and POLR1G/RPA34. Part of Pol I pre-initiation complex (PIC), in which Pol I core assembles with RRN3 and promoter-bound UTBF and SL1/TIF-IB complex. Pol II complex contains a ten-subunit catalytic core composed of POLR2A/RPB1, POLR2B/RPB2, POLR2C/RPB3, POLR2I/RPB9, POLR2J/RPB11, POLR2E/RPABC1, POLR2F/RPABC2, POLR2H/RPABC3, POLR2K/RPABC4 and POLR2L/RPABC5 and a mobile stalk composed of two subunits POLR2D/RPB4 and POLR2G/RPB7. Part of Pol II(G) complex, in which Pol II core associates with an additional subunit POLR2M; unlike conventional Pol II, Pol II(G) functions as a transcriptional repressor. Part of Pol II pre-initiation complex (PIC), in which Pol II core assembles with Mediator, general transcription factors and other specific initiation factors including GTF2E1, GTF2E2, GTF2F1, GTF2F2, TCEA1, ERCC2, ERCC3, GTF2H2, GTF2H3, GTF2H4, GTF2H5, GTF2A1, GTF2A2, GTF2B and TBP; this large multi-subunit PIC complex mediates DNA unwinding and targets Pol II core to the transcription start site where the first phosphodiester bond forms. Directly interacts with POLR2A. Pol III complex consists of a ten-subunit catalytic core composed of POLR3A/RPC1, POLR3B/RPC2, POLR1C/RPAC1, POLR1D/RPAC2, POLR3K/RPC10, POLR2E/RPABC1, POLR2F/RPABC2, POLR2H/RPABC3, POLR2K/RPABC4 and POLR2L/RPABC5; a mobile stalk composed of two subunits POLR3H/RPC8 and CRCP/RPC9, protruding from the core and functioning primarily in transcription initiation; and additional subunits homologous to general transcription factors of the RNA polymerase II machinery, POLR3C/RPC3-POLR3F/RPC6-POLR3G/RPC7 heterotrimer required for transcription initiation and POLR3D/RPC4-POLR3E/RPC5 heterodimer involved in both transcription initiation and termination.

The protein resides in the nucleus. It is found in the nucleolus. DNA-dependent RNA polymerase catalyzes the transcription of DNA into RNA using the four ribonucleoside triphosphates as substrates. Common component of RNA polymerases I, II and III which synthesize ribosomal RNA precursors, mRNA precursors and many functional non-coding RNAs, and small RNAs, such as 5S rRNA and tRNAs, respectively. This is DNA-directed RNA polymerases I, II, and III subunit RPABC3 (POLR2H) from Bos taurus (Bovine).